The primary structure comprises 174 residues: Peptide methionine sulfoxide reductase MsrA (174 aa).

Cys10 is an active-site residue.

Belongs to the MsrA Met sulfoxide reductase family.

The enzyme catalyses L-methionyl-[protein] + [thioredoxin]-disulfide + H2O = L-methionyl-(S)-S-oxide-[protein] + [thioredoxin]-dithiol. It carries out the reaction [thioredoxin]-disulfide + L-methionine + H2O = L-methionine (S)-S-oxide + [thioredoxin]-dithiol. Has an important function as a repair enzyme for proteins that have been inactivated by oxidation. Catalyzes the reversible oxidation-reduction of methionine sulfoxide in proteins to methionine. The sequence is that of Peptide methionine sulfoxide reductase MsrA from Pseudarthrobacter chlorophenolicus (strain ATCC 700700 / DSM 12829 / CIP 107037 / JCM 12360 / KCTC 9906 / NCIMB 13794 / A6) (Arthrobacter chlorophenolicus).